We begin with the raw amino-acid sequence, 196 residues long: tRNA(Phe) 7-((3-amino-3-carboxypropyl)-4-demethylwyosine(37)-N(4))-methyltransferase (196 aa).

It belongs to the TYW3 family.

The enzyme catalyses 4-demethyl-7-[(3S)-3-amino-3-carboxypropyl]wyosine(37) in tRNA(Phe) + S-adenosyl-L-methionine = 7-[(3S)-3-amino-3-carboxypropyl]wyosine(37) in tRNA(Phe) + S-adenosyl-L-homocysteine + H(+). In terms of biological role, S-adenosyl-L-methionine-dependent methyltransferase that acts as a component of the wyosine derivatives biosynthesis pathway. Probably methylates N-4 position of wybutosine-86 to produce wybutosine-72. This Archaeoglobus fulgidus (strain ATCC 49558 / DSM 4304 / JCM 9628 / NBRC 100126 / VC-16) protein is tRNA(Phe) 7-((3-amino-3-carboxypropyl)-4-demethylwyosine(37)-N(4))-methyltransferase.